The primary structure comprises 302 residues: Sulfate adenylyltransferase subunit 2 (302 aa).

This sequence belongs to the PAPS reductase family. CysD subfamily. In terms of assembly, heterodimer composed of CysD, the smaller subunit, and CysN.

The catalysed reaction is sulfate + ATP + H(+) = adenosine 5'-phosphosulfate + diphosphate. It participates in sulfur metabolism; hydrogen sulfide biosynthesis; sulfite from sulfate: step 1/3. Functionally, with CysN forms the ATP sulfurylase (ATPS) that catalyzes the adenylation of sulfate producing adenosine 5'-phosphosulfate (APS) and diphosphate, the first enzymatic step in sulfur assimilation pathway. APS synthesis involves the formation of a high-energy phosphoric-sulfuric acid anhydride bond driven by GTP hydrolysis by CysN coupled to ATP hydrolysis by CysD. This is Sulfate adenylyltransferase subunit 2 from Aeromonas hydrophila subsp. hydrophila (strain ATCC 7966 / DSM 30187 / BCRC 13018 / CCUG 14551 / JCM 1027 / KCTC 2358 / NCIMB 9240 / NCTC 8049).